Reading from the N-terminus, the 137-residue chain is Probable 4-amino-4-deoxy-L-arabinose-phosphoundecaprenol flippase subunit ArnF (137 aa).

Residues 1–3 (MNA) lie on the Cytoplasmic side of the membrane. A helical membrane pass occupies residues 4 to 24 (LRGWLAALGSMLLASAAQLGM). Residues 25 to 44 (RWGMSRLPLPEAWAGQTPER) lie on the Periplasmic side of the membrane. Residues 45–65 (AALLAVALAVAAYAASLLCWL) traverse the membrane as a helical segment. The Cytoplasmic portion of the chain corresponds to 66–76 (AALRHLPLGRA). Residues 77–97 (YSLLSASYALVYLLAASLPAF) form a helical membrane-spanning segment. Topologically, residues 98 to 100 (DET) are periplasmic. A helical membrane pass occupies residues 101 to 121 (FSTSKILGVGLVVLGVLTVNA). Over 122–137 (RRTAAAPAHHPSRKAP) the chain is Cytoplasmic.

It belongs to the ArnF family. As to quaternary structure, heterodimer of ArnE and ArnF.

The protein resides in the cell inner membrane. Its pathway is bacterial outer membrane biogenesis; lipopolysaccharide biosynthesis. In terms of biological role, translocates 4-amino-4-deoxy-L-arabinose-phosphoundecaprenol (alpha-L-Ara4N-phosphoundecaprenol) from the cytoplasmic to the periplasmic side of the inner membrane. The polypeptide is Probable 4-amino-4-deoxy-L-arabinose-phosphoundecaprenol flippase subunit ArnF (Pseudomonas aeruginosa (strain LESB58)).